A 258-amino-acid polypeptide reads, in one-letter code: Trans-aconitate 2-methyltransferase (258 aa).

Belongs to the methyltransferase superfamily. Tam family.

The protein localises to the cytoplasm. It catalyses the reaction trans-aconitate + S-adenosyl-L-methionine = (E)-3-(methoxycarbonyl)pent-2-enedioate + S-adenosyl-L-homocysteine. Functionally, catalyzes the S-adenosylmethionine monomethyl esterification of trans-aconitate. The protein is Trans-aconitate 2-methyltransferase of Acidovorax sp. (strain JS42).